A 379-amino-acid chain; its full sequence is UDP-N-acetylglucosamine--N-acetylmuramyl-(pentapeptide) pyrophosphoryl-undecaprenol N-acetylglucosamine transferase (379 aa).

UDP-N-acetyl-alpha-D-glucosamine is bound by residues 19 to 21 (TGG), asparagine 133, arginine 174, serine 207, isoleucine 261, and glutamine 306.

Belongs to the glycosyltransferase 28 family. MurG subfamily.

The protein resides in the cell inner membrane. It carries out the reaction di-trans,octa-cis-undecaprenyl diphospho-N-acetyl-alpha-D-muramoyl-L-alanyl-D-glutamyl-meso-2,6-diaminopimeloyl-D-alanyl-D-alanine + UDP-N-acetyl-alpha-D-glucosamine = di-trans,octa-cis-undecaprenyl diphospho-[N-acetyl-alpha-D-glucosaminyl-(1-&gt;4)]-N-acetyl-alpha-D-muramoyl-L-alanyl-D-glutamyl-meso-2,6-diaminopimeloyl-D-alanyl-D-alanine + UDP + H(+). It functions in the pathway cell wall biogenesis; peptidoglycan biosynthesis. Its function is as follows. Cell wall formation. Catalyzes the transfer of a GlcNAc subunit on undecaprenyl-pyrophosphoryl-MurNAc-pentapeptide (lipid intermediate I) to form undecaprenyl-pyrophosphoryl-MurNAc-(pentapeptide)GlcNAc (lipid intermediate II). This Porphyromonas gingivalis (strain ATCC BAA-308 / W83) protein is UDP-N-acetylglucosamine--N-acetylmuramyl-(pentapeptide) pyrophosphoryl-undecaprenol N-acetylglucosamine transferase.